The following is a 1238-amino-acid chain: Receptor-type tyrosine-protein phosphatase eta (1238 aa).

The N-terminal stretch at 1–28 (MKPAARETRTPPRSPGLRWALLPLLLLL) is a signal peptide. The Extracellular portion of the chain corresponds to 29 to 876 (RQGQVLCAGA…LPQDPGVICG (848 aa)). The 84-residue stretch at 39–122 (APNPIFDIEA…LNKTITTEPW (84 aa)) folds into the Fibronectin type-III 1 domain. 37 N-linked (GlcNAc...) asparagine glycosylation sites follow: N62, N78, N85, N90, N110, N114, N145, N164, N173, N182, N198, N207, N244, N253, N267, N278, N313, N317, N333, N366, N379, N398, N403, N437, N452, N488, N506, N538, N572, N576, N662, N668, N685, N691, N725, N811, and N838. One can recognise a Fibronectin type-III 2 domain in the interval 170–266 (PGTNNSFAFP…GQPRNKVFKT (97 aa)). Fibronectin type-III domains are found at residues 270–358 (QVSD…SPDQ), 359–443 (VSDF…TDPS), 444–527 (AVTD…TQYT), 528–621 (RPSS…TEPE), 622–718 (PVTS…TDPP), and 717–803 (PPTP…SEVL). Residues 877-897 (AVFGCIFGALAITAVGGFIFW) form a helical membrane-spanning segment. Over 898–1238 (RKKRTDAKNN…MFGKTNGYIA (341 aa)) the chain is Cytoplasmic. S910 is subject to Phosphoserine. The Tyrosine-protein phosphatase domain maps to 942 to 1199 (FAEEYEDLKL…VFLNQCVLDI (258 aa)). Residues D1106, 1140 to 1146 (CSAGVGR), and Q1184 contribute to the substrate site. Catalysis depends on C1140, which acts as the Phosphocysteine intermediate.

The protein belongs to the protein-tyrosine phosphatase family. Receptor class 3 subfamily. Monomer. Interacts with CTNNB1 (phosphorylated) and JUP (phosphorylated). Interacts with FLT3 (phosphorylated). Interacts with GAB1 and GRB2. As to expression, expressed at high levels in brain, kidney, spleen and intestine, and at lower levels in liver, lung, thymus and heart. Expressed at a high level in the myeloid cell line FDC-P2, and at a lower level in the pre-B lymphoid cell line WEHI-231 and the T hybridoma cell line HB21.7.31. Not expressed in the fibroblast cell line NIH3T3 or the erythroid cell line F5-5. Expressed in macrophages.

It localises to the cell membrane. It is found in the cell projection. The protein resides in the ruffle membrane. Its subcellular location is the cell junction. The enzyme catalyses O-phospho-L-tyrosyl-[protein] + H2O = L-tyrosyl-[protein] + phosphate. In terms of biological role, tyrosine phosphatase which dephosphorylates or contributes to the dephosphorylation of CTNND1, FLT3, PDGFRB, MET, KDR, LYN, SRC, MAPK1, MAPK3, EGFR, TJP1, OCLN, PIK3R1 and PIK3R2. Plays a role in cell adhesion, migration, proliferation and differentiation. Has a role in megakaryocytes and platelet formation. Involved in vascular development. May be involved in the mechanism of contact inhibition of cell growth. Regulator of macrophage adhesion and spreading. Positively affects cell-matrix adhesion. Positive regulator of platelet activation and thrombosis. Negative regulator of cell proliferation. Negative regulator of PDGF-stimulated cell migration; through dephosphorylation of PDGFR. Positive regulator of endothelial cell survival, as well as of VEGF-induced SRC and AKT activation; through KDR dephosphorylation. Negative regulator of EGFR signaling pathway; through EGFR dephosphorylation. Enhances the barrier function of epithelial junctions during reassembly. Negatively regulates T-cell receptor (TCR) signaling. Upon T-cell TCR activation, it is up-regulated and excluded from the immunological synapses, while upon T-cell-antigen presenting cells (APC) disengagement, it is no longer excluded and can dephosphorylate PLCG1 and LAT to down-regulate prolongation of signaling. The chain is Receptor-type tyrosine-protein phosphatase eta (Ptprj) from Mus musculus (Mouse).